We begin with the raw amino-acid sequence, 823 residues long: Protein Shroom1 (823 aa).

Methionine 1 bears the N-acetylmethionine mark. Disordered regions lie at residues 1-55, 72-110, and 124-159; these read MEAL…TERL, PTSK…LNRQ, and ATAH…TSFQ. Polar residues-rich tracts occupy residues 28–50 and 72–85; these read RADS…TPSP and PTSK…TQRP. Serine 103, serine 133, serine 137, serine 166, serine 190, and serine 224 each carry phosphoserine. An ASD1 domain is found at 145-233; it reads LQGAQRRVLR…SEPGKLHRVG (89 aa). The interval 181–200 is disordered; that stretch reads TAHVRSASSSQELGEEEPAR. Disordered regions lie at residues 270 to 303 and 349 to 375; these read SSTE…GPCK and QTKP…PEDD. The residue at position 383 (threonine 383) is a Phosphothreonine. A Phosphoserine modification is found at serine 385. Disordered stretches follow at residues 420 to 503 and 566 to 620; these read LHET…LTWG and EMGE…STQA. Composition is skewed to polar residues over residues 444–468, 489–503, and 586–620; these read RPTS…TDPS, SETP…LTWG, and QDLQ…STQA. In terms of domain architecture, ASD2 spans 517–796; the sequence is EALVQELARL…QLDTIWSDLS (280 aa).

Belongs to the shroom family. As to quaternary structure, interacts with F-actin.

It localises to the cytoplasm. The protein resides in the cytoskeleton. Functionally, may be involved in the assembly of microtubule arrays during cell elongation. The chain is Protein Shroom1 (Shroom1) from Mus musculus (Mouse).